Consider the following 280-residue polypeptide: 2-dehydro-3-deoxyphosphooctonate aldolase (280 aa).

It belongs to the KdsA family.

The protein resides in the cytoplasm. It catalyses the reaction D-arabinose 5-phosphate + phosphoenolpyruvate + H2O = 3-deoxy-alpha-D-manno-2-octulosonate-8-phosphate + phosphate. It functions in the pathway carbohydrate biosynthesis; 3-deoxy-D-manno-octulosonate biosynthesis; 3-deoxy-D-manno-octulosonate from D-ribulose 5-phosphate: step 2/3. Its pathway is bacterial outer membrane biogenesis; lipopolysaccharide biosynthesis. This chain is 2-dehydro-3-deoxyphosphooctonate aldolase, found in Neisseria gonorrhoeae (strain NCCP11945).